We begin with the raw amino-acid sequence, 139 residues long: Protein archease (139 aa).

Residues Asp12, Asp138, and Ile139 each contribute to the Ca(2+) site.

Belongs to the archease family.

Activates the tRNA-splicing ligase complex by facilitating the enzymatic turnover of catalytic subunit RtcB. Acts by promoting the guanylylation of RtcB, a key intermediate step in tRNA ligation. Can also alter the NTP specificity of RtcB such that ATP, dGTP or ITP is used efficiently. The sequence is that of Protein archease from Saccharolobus islandicus (strain Y.G.57.14 / Yellowstone #1) (Sulfolobus islandicus).